The primary structure comprises 192 residues: Peptidyl-tRNA hydrolase (192 aa).

Y17 contacts tRNA. Residue H22 is the Proton acceptor of the active site. F68, N70, and N116 together coordinate tRNA.

The protein belongs to the PTH family. As to quaternary structure, monomer.

It localises to the cytoplasm. It catalyses the reaction an N-acyl-L-alpha-aminoacyl-tRNA + H2O = an N-acyl-L-amino acid + a tRNA + H(+). Hydrolyzes ribosome-free peptidyl-tRNAs (with 1 or more amino acids incorporated), which drop off the ribosome during protein synthesis, or as a result of ribosome stalling. Its function is as follows. Catalyzes the release of premature peptidyl moieties from peptidyl-tRNA molecules trapped in stalled 50S ribosomal subunits, and thus maintains levels of free tRNAs and 50S ribosomes. The sequence is that of Peptidyl-tRNA hydrolase from Xylella fastidiosa (strain M12).